The chain runs to 365 residues: 3-dehydroquinate synthase (365 aa).

NAD(+)-binding positions include 106 to 110 (GVIGD), 130 to 131 (TT), Lys142, Lys151, and 169 to 172 (FFAT). 3 residues coordinate Zn(2+): Glu184, His247, and His264.

The protein belongs to the sugar phosphate cyclases superfamily. Dehydroquinate synthase family. NAD(+) serves as cofactor. Co(2+) is required as a cofactor. It depends on Zn(2+) as a cofactor.

The protein localises to the cytoplasm. It catalyses the reaction 7-phospho-2-dehydro-3-deoxy-D-arabino-heptonate = 3-dehydroquinate + phosphate. It participates in metabolic intermediate biosynthesis; chorismate biosynthesis; chorismate from D-erythrose 4-phosphate and phosphoenolpyruvate: step 2/7. Functionally, catalyzes the conversion of 3-deoxy-D-arabino-heptulosonate 7-phosphate (DAHP) to dehydroquinate (DHQ). The sequence is that of 3-dehydroquinate synthase from Listeria monocytogenes serovar 1/2a (strain ATCC BAA-679 / EGD-e).